Reading from the N-terminus, the 100-residue chain is Small ribosomal subunit protein uS14c (100 aa).

The protein belongs to the universal ribosomal protein uS14 family. In terms of assembly, part of the 30S ribosomal subunit.

It localises to the plastid. The protein resides in the chloroplast. In terms of biological role, binds 16S rRNA, required for the assembly of 30S particles. This chain is Small ribosomal subunit protein uS14c, found in Aethionema grandiflorum (Persian stone-cress).